The sequence spans 296 residues: Maltose/maltodextrin transport system permease protein MalG (296 aa).

Residues 1–12 (MAMVQPKSQKLR) lie on the Cytoplasmic side of the membrane. A helical membrane pass occupies residues 13–35 (LLITHLGLLIFIAAIMFPLLMVI). Residues 36–88 (AISLREGNFATGSLIPDKISWEHWRLALGFSVEHADGRVTPPPFPVLLWLWNS) lie on the Periplasmic side of the membrane. An ABC transmembrane type-1 domain is found at 85–281 (LWNSVKIAGI…IPITLVFLLA (197 aa)). Residues 89 to 111 (VKIAGITAIGIVALSTTCAYAFA) traverse the membrane as a helical segment. Over 112-123 (RMRFPGKATLLK) the chain is Cytoplasmic. Residues 124-143 (GMLIFQMFPAVLSLVALYAL) traverse the membrane as a helical segment. Topologically, residues 144-152 (FDRLGQYIP) are periplasmic. A helical membrane pass occupies residues 153–175 (FIGLNTHGGVIFAYLGGIALHVW). At 176 to 204 (TIKGYFETIDSSLEEAAALDGATPWQAFR) the chain is on the cytoplasmic side. Residues 205–227 (LVLLPLSVPILAVVFILSFIAAI) traverse the membrane as a helical segment. Residues 228-257 (TEVPVASLLLRDVDSYTLAVGMQQYLNPQN) are Periplasmic-facing. A helical membrane pass occupies residues 258-280 (YLWGDFAAAAVLSAIPITLVFLL). The Cytoplasmic portion of the chain corresponds to 281–296 (AQRWLVNGLTAGGVKG).

This sequence belongs to the binding-protein-dependent transport system permease family. MalFG subfamily. The complex is composed of two ATP-binding proteins (MalK), two transmembrane proteins (MalG and MalF) and a solute-binding protein (MalE).

Its subcellular location is the cell inner membrane. Functionally, part of the ABC transporter complex MalEFGK involved in maltose/maltodextrin import. Probably responsible for the translocation of the substrate across the membrane. In Salmonella typhimurium (strain LT2 / SGSC1412 / ATCC 700720), this protein is Maltose/maltodextrin transport system permease protein MalG (malG).